The primary structure comprises 188 residues: NAD(P)H-quinone oxidoreductase subunit J (188 aa).

The protein belongs to the complex I 30 kDa subunit family. NDH-1 can be composed of about 15 different subunits; different subcomplexes with different compositions have been identified which probably have different functions.

It localises to the cellular thylakoid membrane. The enzyme catalyses a plastoquinone + NADH + (n+1) H(+)(in) = a plastoquinol + NAD(+) + n H(+)(out). It catalyses the reaction a plastoquinone + NADPH + (n+1) H(+)(in) = a plastoquinol + NADP(+) + n H(+)(out). NDH-1 shuttles electrons from an unknown electron donor, via FMN and iron-sulfur (Fe-S) centers, to quinones in the respiratory and/or the photosynthetic chain. The immediate electron acceptor for the enzyme in this species is believed to be plastoquinone. Couples the redox reaction to proton translocation, and thus conserves the redox energy in a proton gradient. Cyanobacterial NDH-1 also plays a role in inorganic carbon-concentration. This is NAD(P)H-quinone oxidoreductase subunit J from Parasynechococcus marenigrum (strain WH8102).